The primary structure comprises 363 residues: Holliday junction branch migration complex subunit RuvB (363 aa).

Positions 1 to 23 (MHKDEDQRLLGPAPLPNDPDRSL) are disordered. Residues 1–184 (MHKDEDQRLL…FGIPIRLNFY (184 aa)) are large ATPase domain (RuvB-L). Residues Leu-23, Arg-24, Gly-65, Lys-68, Thr-69, Thr-70, 131 to 133 (EDY), Arg-174, Tyr-184, and Arg-221 contribute to the ATP site. Thr-69 lines the Mg(2+) pocket. The interval 185 to 255 (TIEELEYIVQ…IADEALSRLE (71 aa)) is small ATPAse domain (RuvB-S). The interval 258 to 363 (HLGLDPLDRR…QTTLWDGEDD (106 aa)) is head domain (RuvB-H). DNA is bound by residues Arg-294, Arg-313, and Arg-318.

The protein belongs to the RuvB family. In terms of assembly, homohexamer. Forms an RuvA(8)-RuvB(12)-Holliday junction (HJ) complex. HJ DNA is sandwiched between 2 RuvA tetramers; dsDNA enters through RuvA and exits via RuvB. An RuvB hexamer assembles on each DNA strand where it exits the tetramer. Each RuvB hexamer is contacted by two RuvA subunits (via domain III) on 2 adjacent RuvB subunits; this complex drives branch migration. In the full resolvosome a probable DNA-RuvA(4)-RuvB(12)-RuvC(2) complex forms which resolves the HJ.

Its subcellular location is the cytoplasm. It carries out the reaction ATP + H2O = ADP + phosphate + H(+). The RuvA-RuvB-RuvC complex processes Holliday junction (HJ) DNA during genetic recombination and DNA repair, while the RuvA-RuvB complex plays an important role in the rescue of blocked DNA replication forks via replication fork reversal (RFR). RuvA specifically binds to HJ cruciform DNA, conferring on it an open structure. The RuvB hexamer acts as an ATP-dependent pump, pulling dsDNA into and through the RuvAB complex. RuvB forms 2 homohexamers on either side of HJ DNA bound by 1 or 2 RuvA tetramers; 4 subunits per hexamer contact DNA at a time. Coordinated motions by a converter formed by DNA-disengaged RuvB subunits stimulates ATP hydrolysis and nucleotide exchange. Immobilization of the converter enables RuvB to convert the ATP-contained energy into a lever motion, pulling 2 nucleotides of DNA out of the RuvA tetramer per ATP hydrolyzed, thus driving DNA branch migration. The RuvB motors rotate together with the DNA substrate, which together with the progressing nucleotide cycle form the mechanistic basis for DNA recombination by continuous HJ branch migration. Branch migration allows RuvC to scan DNA until it finds its consensus sequence, where it cleaves and resolves cruciform DNA. This chain is Holliday junction branch migration complex subunit RuvB, found in Bartonella tribocorum (strain CIP 105476 / IBS 506).